We begin with the raw amino-acid sequence, 705 residues long: Elongation factor G (705 aa).

Positions 8-290 (HRYRNIGIMA…GVIHLLPSPA (283 aa)) constitute a tr-type G domain. Residues 17–24 (AHIDAGKT), 88–92 (DTPGH), and 142–145 (NKMD) contribute to the GTP site.

This sequence belongs to the TRAFAC class translation factor GTPase superfamily. Classic translation factor GTPase family. EF-G/EF-2 subfamily.

The protein localises to the cytoplasm. Functionally, catalyzes the GTP-dependent ribosomal translocation step during translation elongation. During this step, the ribosome changes from the pre-translocational (PRE) to the post-translocational (POST) state as the newly formed A-site-bound peptidyl-tRNA and P-site-bound deacylated tRNA move to the P and E sites, respectively. Catalyzes the coordinated movement of the two tRNA molecules, the mRNA and conformational changes in the ribosome. The polypeptide is Elongation factor G (Xylella fastidiosa (strain M23)).